A 50-amino-acid polypeptide reads, in one-letter code: Omega-conotoxin Bu8 (50 aa).

A1 is a signal peptide. Residues 2 to 24 (EDSRGTQLHRALRKATKLSESTR) constitute a propeptide that is removed on maturation. 3 cysteine pairs are disulfide-bonded: C25-C40, C32-C44, and C39-C49. C49 bears the Cysteine amide mark.

This sequence belongs to the conotoxin O1 superfamily. Expressed by the venom duct.

The protein localises to the secreted. Omega-conotoxins act at presynaptic membranes, they bind and block voltage-gated calcium channels (Cav). This toxin selectively and potently inhibits depolarization-activated rat Cav2.2/CACNA1B currents (IC(50)=89 nM), when coexpressed with alpha-2/delta-1 (CACNA2D1) and beta-3 (CACNB3) subunits. In vivo, is lethal to fish and displays potent analgesic activity in mice pain models of hot plate and acetic acid writhing but has fewer side effects on mouse motor function and lower toxicity in goldfish. Shows higher or similar analgesic activity in the pain models mentioned above compared to MVIIA, and lower side effects. In addition, it blocks Cav2.2/CACNA1B more rapidly than MVIIA and also dissociates more rapidly. This chain is Omega-conotoxin Bu8, found in Conus bullatus (Bubble cone).